An 86-amino-acid polypeptide reads, in one-letter code: Small ribosomal subunit protein bS20 (86 aa).

The tract at residues 1–27 (MANSKQAKKRAGQSEKRRQHNASRRSM) is disordered.

This sequence belongs to the bacterial ribosomal protein bS20 family.

Functionally, binds directly to 16S ribosomal RNA. This chain is Small ribosomal subunit protein bS20, found in Colwellia psychrerythraea (strain 34H / ATCC BAA-681) (Vibrio psychroerythus).